The sequence spans 334 residues: MHPDTRSQPFAPLFDDVIVLTGPTASGKTELALRVAETLAARTNGRQEIEILSLDAIAVYRGMDIGSAKPTSDQLARAPHHLIDLVDPWDEFSVAEYLHSAHACVQDILERSKRPMFVGGTPMYLKGVLRGFDAGPPADEAFRNAVEEDLRQHGIGALRERLHQVDPLSAAKIDRGDSRRMIRALEFARATGTPISHRQLQFDTARSSHEGLVFALRVPRPVLHQRIEKRVEEMFAEGLVAEVQGLLALEQPLSKTSRQAVGYREIIEAIAAGDAPETAAERVVFHTRRLARRQETWLRSFSEIRGLGSFESDSAPDIDQCVESMVETILSFSD.

ATP is bound at residue 22-29; that stretch reads GPTASGKT. Residue 24–29 participates in substrate binding; the sequence is TASGKT.

This sequence belongs to the IPP transferase family. Monomer. Mg(2+) is required as a cofactor.

The enzyme catalyses adenosine(37) in tRNA + dimethylallyl diphosphate = N(6)-dimethylallyladenosine(37) in tRNA + diphosphate. Functionally, catalyzes the transfer of a dimethylallyl group onto the adenine at position 37 in tRNAs that read codons beginning with uridine, leading to the formation of N6-(dimethylallyl)adenosine (i(6)A). In Rhodopirellula baltica (strain DSM 10527 / NCIMB 13988 / SH1), this protein is tRNA dimethylallyltransferase.